The chain runs to 762 residues: Phosphoribosylformylglycinamidine synthase subunit PurL (762 aa).

H58 is an active-site residue. Positions 61 and 105 each coordinate ATP. E107 lines the Mg(2+) pocket. Substrate-binding positions include 108–111 and R130; that span reads SHNH. H109 acts as the Proton acceptor in catalysis. D131 is a Mg(2+) binding site. Q255 contributes to the substrate binding site. D283 is a binding site for Mg(2+). 327–329 provides a ligand contact to substrate; it reads ESQ. Residues N513 and G550 each contribute to the ATP site. N551 contacts Mg(2+). S553 contacts substrate.

The protein belongs to the FGAMS family. Monomer. Part of the FGAM synthase complex composed of 1 PurL, 1 PurQ and 2 PurS subunits.

The protein resides in the cytoplasm. The catalysed reaction is N(2)-formyl-N(1)-(5-phospho-beta-D-ribosyl)glycinamide + L-glutamine + ATP + H2O = 2-formamido-N(1)-(5-O-phospho-beta-D-ribosyl)acetamidine + L-glutamate + ADP + phosphate + H(+). Its pathway is purine metabolism; IMP biosynthesis via de novo pathway; 5-amino-1-(5-phospho-D-ribosyl)imidazole from N(2)-formyl-N(1)-(5-phospho-D-ribosyl)glycinamide: step 1/2. In terms of biological role, part of the phosphoribosylformylglycinamidine synthase complex involved in the purines biosynthetic pathway. Catalyzes the ATP-dependent conversion of formylglycinamide ribonucleotide (FGAR) and glutamine to yield formylglycinamidine ribonucleotide (FGAM) and glutamate. The FGAM synthase complex is composed of three subunits. PurQ produces an ammonia molecule by converting glutamine to glutamate. PurL transfers the ammonia molecule to FGAR to form FGAM in an ATP-dependent manner. PurS interacts with PurQ and PurL and is thought to assist in the transfer of the ammonia molecule from PurQ to PurL. This chain is Phosphoribosylformylglycinamidine synthase subunit PurL, found in Corynebacterium glutamicum (strain R).